We begin with the raw amino-acid sequence, 502 residues long: ATP synthase subunit alpha (502 aa).

Position 169-176 (169-176 (GDRQTGKT)) interacts with ATP.

The protein belongs to the ATPase alpha/beta chains family. F-type ATPases have 2 components, CF(1) - the catalytic core - and CF(0) - the membrane proton channel. CF(1) has five subunits: alpha(3), beta(3), gamma(1), delta(1), epsilon(1). CF(0) has three main subunits: a(1), b(2) and c(9-12). The alpha and beta chains form an alternating ring which encloses part of the gamma chain. CF(1) is attached to CF(0) by a central stalk formed by the gamma and epsilon chains, while a peripheral stalk is formed by the delta and b chains.

It is found in the cell inner membrane. It carries out the reaction ATP + H2O + 4 H(+)(in) = ADP + phosphate + 5 H(+)(out). Produces ATP from ADP in the presence of a proton gradient across the membrane. The alpha chain is a regulatory subunit. The polypeptide is ATP synthase subunit alpha (Trichlorobacter lovleyi (strain ATCC BAA-1151 / DSM 17278 / SZ) (Geobacter lovleyi)).